Here is a 185-residue protein sequence, read N- to C-terminus: Elongation factor P (185 aa).

This sequence belongs to the elongation factor P family.

Its subcellular location is the cytoplasm. It functions in the pathway protein biosynthesis; polypeptide chain elongation. Its function is as follows. Involved in peptide bond synthesis. Stimulates efficient translation and peptide-bond synthesis on native or reconstituted 70S ribosomes in vitro. Probably functions indirectly by altering the affinity of the ribosome for aminoacyl-tRNA, thus increasing their reactivity as acceptors for peptidyl transferase. The protein is Elongation factor P of Streptococcus uberis (strain ATCC BAA-854 / 0140J).